The following is a 320-amino-acid chain: Beta-carotene 4-ketolase 3 (320 aa).

The catalysed reaction is echinenone + 2 AH2 + 2 O2 = canthaxanthin + 2 A + 3 H2O. It carries out the reaction all-trans-beta-carotene + 2 AH2 + 2 O2 = echinenone + 2 A + 3 H2O. It functions in the pathway carotenoid biosynthesis. Functionally, involved in the biosynthesis of ketocarotenoids which are powerful anti-oxidative molecules. Catalyzes the conversion of beta-carotene to canthaxanthin via echinenone. The chain is Beta-carotene 4-ketolase 3 from Haematococcus lacustris (Green alga).